The following is a 381-amino-acid chain: Dihydroorotate dehydrogenase (quinone) (381 aa).

Residues A74–K78 and T98 each bind FMN. K78 serves as a coordination point for substrate. N123–F127 is a substrate binding site. FMN-binding residues include N152 and N185. Residue N185 participates in substrate binding. S188 acts as the Nucleophile in catalysis. Residue N190 participates in substrate binding. The FMN site is built by K223 and T251. Substrate is bound at residue N252–T253. FMN contacts are provided by residues G289, G318, and Y339–T340. The disordered stretch occupies residues R359–A381.

The protein belongs to the dihydroorotate dehydrogenase family. Type 2 subfamily. In terms of assembly, monomer. FMN is required as a cofactor.

It is found in the cell membrane. It carries out the reaction (S)-dihydroorotate + a quinone = orotate + a quinol. Its pathway is pyrimidine metabolism; UMP biosynthesis via de novo pathway; orotate from (S)-dihydroorotate (quinone route): step 1/1. In terms of biological role, catalyzes the conversion of dihydroorotate to orotate with quinone as electron acceptor. This Synechococcus sp. (strain JA-2-3B'a(2-13)) (Cyanobacteria bacterium Yellowstone B-Prime) protein is Dihydroorotate dehydrogenase (quinone).